The sequence spans 211 residues: NADH-quinone oxidoreductase subunit I 1 (211 aa).

4Fe-4S ferredoxin-type domains follow at residues 50-80 (LNRHPDGLEKCVGCELCAWACPADAIYVEGA) and 96-125 (RVYQINYARCILCGLCIEACPTRALTMTNE). 8 residues coordinate [4Fe-4S] cluster: C60, C63, C66, C70, C105, C108, C111, and C115. The segment at 192-211 (QEGDSTFGATEPASEEVIRR) is disordered.

Belongs to the complex I 23 kDa subunit family. As to quaternary structure, NDH-1 is composed of 14 different subunits. Subunits NuoA, H, J, K, L, M, N constitute the membrane sector of the complex. Requires [4Fe-4S] cluster as cofactor.

The protein localises to the cell membrane. The catalysed reaction is a quinone + NADH + 5 H(+)(in) = a quinol + NAD(+) + 4 H(+)(out). Its function is as follows. NDH-1 shuttles electrons from NADH, via FMN and iron-sulfur (Fe-S) centers, to quinones in the respiratory chain. The immediate electron acceptor for the enzyme in this species is believed to be ubiquinone. Couples the redox reaction to proton translocation (for every two electrons transferred, four hydrogen ions are translocated across the cytoplasmic membrane), and thus conserves the redox energy in a proton gradient. The sequence is that of NADH-quinone oxidoreductase subunit I 1 from Streptomyces coelicolor (strain ATCC BAA-471 / A3(2) / M145).